We begin with the raw amino-acid sequence, 388 residues long: Oxytocin receptor (388 aa).

At 1–38 (MEGTPAANWSIELDLGSGVPPGAEGNLTAGPPRRNEAL) the chain is on the extracellular side. 2 N-linked (GlcNAc...) asparagine glycosylation sites follow: Asn8 and Asn26. The chain crosses the membrane as a helical span at residues 39 to 63 (ARVEVAVLCLILFLALSGNACVLLA). Residues 64 to 74 (LRTTRHKHSRL) are Cytoplasmic-facing. Residues 75-97 (FFFMKHLSIADLVVAVFQVLPQL) traverse the membrane as a helical segment. At 98 to 113 (LWDITFRFYGPDLLCR) the chain is on the extracellular side. Residues Cys112 and Cys187 are joined by a disulfide bond. The chain crosses the membrane as a helical span at residues 114 to 135 (LVKYLQVVGMFASTYLLLLMSL). The Cytoplasmic segment spans residues 136-154 (DRCLAICQPLRSLRRRTDR). Residues 155-175 (LAVLATWLGCLVASVPQVHIF) traverse the membrane as a helical segment. Residues 176 to 202 (SLREVADGVFDCWAVFIQPWGPKAYVT) are Extracellular-facing. A helical membrane pass occupies residues 203–225 (WITLAVYIVPVIVLAACYGLISF). Residues 226–274 (KIWQNLRLKTAAAAAAAEGSDAAGGAGRAALARVSSVKLISKAKIRTVK) are Cytoplasmic-facing. The chain crosses the membrane as a helical span at residues 275-293 (MTFIIVLAFIVCWTPFFFV). Over 294–308 (QMWSVWDVNAPKEAS) the chain is Extracellular. The helical transmembrane segment at 309–331 (AFIIAMLLASLNSCCNPWIYMLF) threads the bilayer. Topologically, residues 332 to 388 (TGHLFHELVQRFLCCSARYLKGSRPGETSISKKSNSSTFVLSRRSSSQRSCSQPSSA) are cytoplasmic. Residues 354–388 (SRPGETSISKKSNSSTFVLSRRSSSQRSCSQPSSA) form a disordered region. 2 positions are modified to phosphoserine: Ser365 and Ser367. Residues 365 to 388 (SNSSTFVLSRRSSSQRSCSQPSSA) are compositionally biased toward low complexity.

Belongs to the G-protein coupled receptor 1 family. Vasopressin/oxytocin receptor subfamily.

The protein localises to the cell membrane. Its function is as follows. Receptor for oxytocin. The activity of this receptor is mediated by G proteins which activate a phosphatidylinositol-calcium second messenger system. This chain is Oxytocin receptor (Oxtr), found in Mus musculus (Mouse).